The following is a 260-amino-acid chain: Methylphosphonate hydroxylase (260 aa).

K107 serves as a coordination point for 2-oxoglutarate. Fe cation contacts are provided by H117, D119, and H195.

The protein belongs to the PhyH family. Fe(2+) serves as cofactor.

The catalysed reaction is methylphosphonate + 2-oxoglutarate + O2 = hydroxymethylphosphonate + succinate + CO2. Functionally, part of an oxidative pathway for utilization of methylphosphonic acid as a phosphate source. Catalyzes the conversion of methylphosphonic acid to hydroxymethylphosphonic acid. Is specific for the hydroxylation of methylphosphonate. This chain is Methylphosphonate hydroxylase, found in Gimesia maris (strain ATCC 29201 / DSM 8797 / 534-30) (Planctomyces maris).